A 387-amino-acid chain; its full sequence is Large ribosomal subunit protein uL3 (387 aa).

At Ser24 the chain carries Phosphoserine. A Glycyl lysine isopeptide (Lys-Gly) (interchain with G-Cter in ubiquitin) cross-link involves residue Lys39. Thr103 is modified (phosphothreonine). A Glycyl lysine isopeptide (Lys-Gly) (interchain with G-Cter in ubiquitin) cross-link involves residue Lys136. Ser156 bears the Phosphoserine mark. His243 carries the post-translational modification Pros-methylhistidine. Residue Ser297 is modified to Phosphoserine.

This sequence belongs to the universal ribosomal protein uL3 family. Component of the large ribosomal subunit (LSU). Mature yeast ribosomes consist of a small (40S) and a large (60S) subunit. The 40S small subunit contains 1 molecule of ribosomal RNA (18S rRNA) and 33 different proteins (encoded by 57 genes). The large 60S subunit contains 3 rRNA molecules (25S, 5.8S and 5S rRNA) and 46 different proteins (encoded by 81 genes). uL3 forms together with ES39L one of the contact sites for the signal recognition particle that targets ribosomes to the endoplasmic reticulum membrane. Post-translationally, methylation at His-243 by HPM1 is required for proper 60S subunit assembly and promotes translational elongation fidelity.

It is found in the cytoplasm. Its function is as follows. Component of the ribosome, a large ribonucleoprotein complex responsible for the synthesis of proteins in the cell. The small ribosomal subunit (SSU) binds messenger RNAs (mRNAs) and translates the encoded message by selecting cognate aminoacyl-transfer RNA (tRNA) molecules. The large subunit (LSU) contains the ribosomal catalytic site termed the peptidyl transferase center (PTC), which catalyzes the formation of peptide bonds, thereby polymerizing the amino acids delivered by tRNAs into a polypeptide chain. The nascent polypeptides leave the ribosome through a tunnel in the LSU and interact with protein factors that function in enzymatic processing, targeting, and the membrane insertion of nascent chains at the exit of the ribosomal tunnel. uL3 plays a role in coordinating processes of accommodating the aminoacyl-tRNA in the PTC. This chain is Large ribosomal subunit protein uL3, found in Saccharomyces cerevisiae (strain ATCC 204508 / S288c) (Baker's yeast).